A 392-amino-acid chain; its full sequence is Leucine-rich repeat-containing protein 74B (392 aa).

The disordered stretch occupies residues 24–46 (RLSGVPEAEQGPEANWDSDLETE). 9 LRR repeats span residues 106 to 129 (NPYV…ALAG), 134 to 157 (SSSI…ALCA), 162 to 185 (NQAM…HLAE), 192 to 213 (DLKS…TLGP), 220 to 241 (GLTE…AFAR), 248 to 269 (FLKV…AVGE), 276 to 297 (VLEE…SLGL), 304 to 325 (TLRI…GLLK), and 334 to 356 (ALEL…ASSV).

The chain is Leucine-rich repeat-containing protein 74B from Homo sapiens (Human).